The primary structure comprises 268 residues: uncharacterized protein (268 aa).

A coiled-coil region spans residues 132-159; that stretch reads DELDEKIIEFDTKMNEILEELLEDVEVE.

This is an uncharacterized protein from Methanocaldococcus jannaschii (strain ATCC 43067 / DSM 2661 / JAL-1 / JCM 10045 / NBRC 100440) (Methanococcus jannaschii).